Consider the following 157-residue polypeptide: Nascent polypeptide-associated complex subunit alpha (157 aa).

The 66-residue stretch at 6-71 (TTDESHIHKT…LGSPVNLHQL (66 aa)) folds into the NAC-A/B domain. A compositionally biased stretch (basic and acidic residues) spans 81–107 (SSKDQEGPGLYDEIHSDPQEDGVKEAE). Residues 81-116 (SSKDQEGPGLYDEIHSDPQEDGVKEAEEITVDPSDE) are disordered. Positions 118–157 (LSEEDIKLISSQVKASRNDIIKALVESEYDVVDAMMKLTK) constitute a UBA domain.

Belongs to the NAC-alpha family.

The protein localises to the cytoplasm. The protein resides in the nucleus. Functionally, may be involved in mitochondrial protein import by enhancing productive ribosome interactions with the outer mitochondrial membrane and blocks the inappropriate interaction of ribosomes translating non-secretory nascent polypeptides with translocation sites in the membrane of the endoplasmic reticulum. EGD2 may also be involved in transcription regulation. In Encephalitozoon cuniculi (strain GB-M1) (Microsporidian parasite), this protein is Nascent polypeptide-associated complex subunit alpha (EGD2).